Here is a 394-residue protein sequence, read N- to C-terminus: Nuclear hormone receptor family member nhr-18 (394 aa).

The segment at residues 8–83 (SGSCEVCGDK…VGMDTRRFQT (76 aa)) is a DNA-binding region (nuclear receptor). NR C4-type zinc fingers lie at residues 11 to 31 (CEVCGDKTSGRHFGVMSCRAC) and 48 to 71 (CPNGTCHTSVNGKFNCKQCRLKKC). In terms of domain architecture, NR LBD spans 134–394 (MLQKPTNHVL…FSHPEMFEAT (261 aa)).

The protein belongs to the nuclear hormone receptor family.

It localises to the nucleus. Orphan nuclear receptor. The chain is Nuclear hormone receptor family member nhr-18 (nhr-18) from Caenorhabditis elegans.